We begin with the raw amino-acid sequence, 113 residues long: Hydrogenase maturation factor HypA (113 aa).

H2 is a Ni(2+) binding site. Residues C73, C76, C89, and C92 each contribute to the Zn(2+) site.

This sequence belongs to the HypA/HybF family.

Functionally, involved in the maturation of [NiFe] hydrogenases. Required for nickel insertion into the metal center of the hydrogenase. This is Hydrogenase maturation factor HypA from Aeromonas salmonicida (strain A449).